A 466-amino-acid chain; its full sequence is Soluble pyridine nucleotide transhydrogenase (466 aa).

FAD is bound at residue glutamate 36–cysteine 45.

This sequence belongs to the class-I pyridine nucleotide-disulfide oxidoreductase family. FAD is required as a cofactor.

It localises to the cytoplasm. It carries out the reaction NAD(+) + NADPH = NADH + NADP(+). Its function is as follows. Conversion of NADPH, generated by peripheral catabolic pathways, to NADH, which can enter the respiratory chain for energy generation. The polypeptide is Soluble pyridine nucleotide transhydrogenase (Vibrio atlanticus (strain LGP32) (Vibrio splendidus (strain Mel32))).